The sequence spans 633 residues: Cyclic GMP-AMP synthase-like receptor 1 (633 aa).

3 disordered regions span residues Lys-23–Thr-80, Phe-107–Phe-214, and Arg-250–Ser-276. Residues Lys-29–Thr-67 are compositionally biased toward basic and acidic residues. Residues His-68 to Thr-80 are compositionally biased toward polar residues. Composition is skewed to basic and acidic residues over residues Arg-125–Thr-143, Arg-176–Thr-194, and Arg-250–Pro-274. Residues Glu-353, Asp-355, and Asp-455 each contribute to the Mg(2+) site.

It belongs to the mab-21 family. Mg(2+) is required as a cofactor. Mn(2+) serves as cofactor.

It catalyses the reaction UTP + ATP = 2',3'-cUAMP + 2 diphosphate. Functionally, nucleotidyltransferase that catalyzes the formation of cyclic UMP-AMP (2',3'-cUAMP) from ATP and UTP and plays a key role in innate immunity. Acts as a key sensor of double-stranded DNA (dsDNA), the presence of dsDNA in the cytoplasm being a danger signal that triggers the immune responses. Directly binds dsDNA, activating the nucleotidyltransferase activity, leading to synthesis of 2',3'-cUAMP, a second messenger that binds to and activates Sting, thereby triggering the immune response via activation of the NF-kappa-B transcription factor. This chain is Cyclic GMP-AMP synthase-like receptor 1, found in Crassostrea virginica (Eastern oyster).